The sequence spans 235 residues: Peptidase E (235 aa).

Active-site charge relay system residues include Ser-122, Asp-137, and His-159.

It belongs to the peptidase S51 family.

The protein localises to the cytoplasm. It catalyses the reaction Dipeptidase E catalyzes the hydrolysis of dipeptides Asp-|-Xaa. It does not act on peptides with N-terminal Glu, Asn or Gln, nor does it cleave isoaspartyl peptides.. In terms of biological role, hydrolyzes dipeptides containing N-terminal aspartate residues. May play a role in allowing the cell to use peptide aspartate to spare carbon otherwise required for the synthesis of the aspartate family of amino acids. This Shewanella amazonensis (strain ATCC BAA-1098 / SB2B) protein is Peptidase E.